We begin with the raw amino-acid sequence, 355 residues long: Lipoyl synthase (355 aa).

An RPE1 insert domain is found at 7-55; the sequence is HLSKFAYREEFAGNTEVLATAAYKEDCADASTGLTPKLPLEVEFGKMSK. 7 residues coordinate [4Fe-4S] cluster: C86, C91, C97, C112, C116, C119, and S325. The region spanning 98-314 is the Radical SAM core domain; the sequence is WSKKHATVMI…ERVARTKGFL (217 aa).

This sequence belongs to the radical SAM superfamily. Lipoyl synthase family. [4Fe-4S] cluster serves as cofactor.

It localises to the cytoplasm. The catalysed reaction is [[Fe-S] cluster scaffold protein carrying a second [4Fe-4S](2+) cluster] + N(6)-octanoyl-L-lysyl-[protein] + 2 oxidized [2Fe-2S]-[ferredoxin] + 2 S-adenosyl-L-methionine + 4 H(+) = [[Fe-S] cluster scaffold protein] + N(6)-[(R)-dihydrolipoyl]-L-lysyl-[protein] + 4 Fe(3+) + 2 hydrogen sulfide + 2 5'-deoxyadenosine + 2 L-methionine + 2 reduced [2Fe-2S]-[ferredoxin]. The protein operates within protein modification; protein lipoylation via endogenous pathway; protein N(6)-(lipoyl)lysine from octanoyl-[acyl-carrier-protein]: step 2/2. In terms of biological role, catalyzes the radical-mediated insertion of two sulfur atoms into the C-6 and C-8 positions of the octanoyl moiety bound to the lipoyl domains of lipoate-dependent enzymes, thereby converting the octanoylated domains into lipoylated derivatives. This is Lipoyl synthase from Rickettsia bellii (strain RML369-C).